An 858-amino-acid polypeptide reads, in one-letter code: DNA mismatch repair protein MutS (858 aa).

Residue 611–618 (GPNMGGKS) coordinates ATP.

This sequence belongs to the DNA mismatch repair MutS family.

This protein is involved in the repair of mismatches in DNA. It is possible that it carries out the mismatch recognition step. This protein has a weak ATPase activity. This Actinobacillus succinogenes (strain ATCC 55618 / DSM 22257 / CCUG 43843 / 130Z) protein is DNA mismatch repair protein MutS.